Reading from the N-terminus, the 95-residue chain is Co-chaperonin GroES (95 aa).

The protein belongs to the GroES chaperonin family. Heptamer of 7 subunits arranged in a ring. Interacts with the chaperonin GroEL.

It localises to the cytoplasm. Its function is as follows. Together with the chaperonin GroEL, plays an essential role in assisting protein folding. The GroEL-GroES system forms a nano-cage that allows encapsulation of the non-native substrate proteins and provides a physical environment optimized to promote and accelerate protein folding. GroES binds to the apical surface of the GroEL ring, thereby capping the opening of the GroEL channel. The protein is Co-chaperonin GroES of Desulfatibacillum aliphaticivorans.